The sequence spans 525 residues: Peptide chain release factor 3 (525 aa).

The tr-type G domain maps to 11–279; the sequence is NNRRTFAIIS…AYLKYAPKPA (269 aa). GTP-binding positions include 20 to 27, 88 to 92, and 142 to 145; these read SHPDAGKT, DTPGH, and NKLD.

Belongs to the TRAFAC class translation factor GTPase superfamily. Classic translation factor GTPase family. PrfC subfamily.

Its subcellular location is the cytoplasm. Its function is as follows. Increases the formation of ribosomal termination complexes and stimulates activities of RF-1 and RF-2. It binds guanine nucleotides and has strong preference for UGA stop codons. It may interact directly with the ribosome. The stimulation of RF-1 and RF-2 is significantly reduced by GTP and GDP, but not by GMP. This is Peptide chain release factor 3 from Ligilactobacillus salivarius (strain UCC118) (Lactobacillus salivarius).